The primary structure comprises 490 residues: Ribulose bisphosphate carboxylase large chain (490 aa).

Substrate is bound by residues Asn-127 and Thr-177. The active-site Proton acceptor is Lys-179. Lys-181 provides a ligand contact to substrate. Residues Lys-205, Asp-207, and Glu-208 each contribute to the Mg(2+) site. Lys-205 is modified (N6-carboxylysine). The Proton acceptor role is filled by His-297. 3 residues coordinate substrate: Arg-298, His-330, and Ser-382.

Belongs to the RuBisCO large chain family. Type I subfamily. Heterohexadecamer of 8 large chains and 8 small chains. The cofactor is Mg(2+).

The protein localises to the plastid. It is found in the chloroplast. The catalysed reaction is 2 (2R)-3-phosphoglycerate + 2 H(+) = D-ribulose 1,5-bisphosphate + CO2 + H2O. The enzyme catalyses D-ribulose 1,5-bisphosphate + O2 = 2-phosphoglycolate + (2R)-3-phosphoglycerate + 2 H(+). In terms of biological role, ruBisCO catalyzes two reactions: the carboxylation of D-ribulose 1,5-bisphosphate, the primary event in carbon dioxide fixation, as well as the oxidative fragmentation of the pentose substrate in the photorespiration process. Both reactions occur simultaneously and in competition at the same active site. This is Ribulose bisphosphate carboxylase large chain from Thalassiosira pseudonana (Marine diatom).